We begin with the raw amino-acid sequence, 416 residues long: Orexin/Hypocretin receptor type 1 (416 aa).

A disordered region spans residues 1–22 (MEPSATPGAQPGVPTSSGEPFH). Over 1–46 (MEPSATPGAQPGVPTSSGEPFHLPPDYEDEFLRYLWRDYLYPKQYE) the chain is Extracellular. The interval 26 to 41 (DYEDEFLRYLWRDYLY) is required for response to orexin-A. A helical membrane pass occupies residues 47–67 (WVLIAAYVAVFLIALVGNTLV). Over 68 to 82 (CLAVWRNHHMRTVTN) the chain is Cytoplasmic. A helical transmembrane segment spans residues 83 to 105 (YFIVNLSLADVLVTAICLPASLL). Over 106-119 (VDITESWLFGHALC) the chain is Extracellular. Cysteine 119 and cysteine 202 are oxidised to a cystine. Residues 120-140 (KVIPYLQAVSVSVAVLTLSFI) form a helical membrane-spanning segment. Residues 141-160 (ALDRWYAICHPLLFKSTARR) lie on the Cytoplasmic side of the membrane. The chain crosses the membrane as a helical span at residues 161 to 182 (ARGSILGIWAVSLAVMVPQAAV). Residues 183–213 (MECSSVLPELANRTRLFSVCDERWADELYPK) are Extracellular-facing. The N-linked (GlcNAc...) asparagine glycan is linked to asparagine 194. The helical transmembrane segment at 214–235 (IYHSCFFFVTYLAPLGLMGMAY) threads the bilayer. The Cytoplasmic segment spans residues 236–298 (FQIFRKLWGP…QMRARRKTAK (63 aa)). The helical transmembrane segment at 299 to 321 (MLMVVLLVFALCYLPISVLNVLK) threads the bilayer. The Extracellular portion of the chain corresponds to 322–336 (RVFGMFRQASDREAV). The chain crosses the membrane as a helical span at residues 337–360 (YACFTFSHWLVYANSAANPIIYNF). Residues 361–416 (LSGKFREQFKAAFSCCLPGLGPSSSARHKSLSLQSRCSVSKVSEHVVLTTVTTVLS) lie on the Cytoplasmic side of the membrane.

Belongs to the G-protein coupled receptor 1 family. In terms of tissue distribution, highly expressed in the brain in the prefrontal cortex, hippocampus, paraventricular thalamus, ventromedial hypothalamus, arcuate nucleus, dorsal raphe nucleus, and locus coeruleus. Not detected in the spleen, lung, liver, skeletal muscle, kidney and testis. Orexin receptor mRNA expression has also been reported in the adrenal gland, enteric nervous system, and pancreas.

Its subcellular location is the cell membrane. Moderately selective excitatory receptor for orexin-A and, with a lower affinity, for orexin-B neuropeptide. Triggers an increase in cytoplasmic Ca(2+) levels in response to orexin-A binding. The protein is Orexin/Hypocretin receptor type 1 of Rattus norvegicus (Rat).